The primary structure comprises 153 residues: Ribosome maturation factor RimP (153 aa).

Belongs to the RimP family.

It is found in the cytoplasm. In terms of biological role, required for maturation of 30S ribosomal subunits. The polypeptide is Ribosome maturation factor RimP (Coxiella burnetii (strain CbuG_Q212) (Coxiella burnetii (strain Q212))).